A 332-amino-acid polypeptide reads, in one-letter code: Centrosomal AT-AC splicing factor (332 aa).

The tract at residues 1-169 is required for centrosome location; that stretch reads MAPAQRCPLC…QSRQEVVRSV (169 aa). K31 carries the N6-acetyllysine; by NAT10 modification. The stretch at 137–168 forms a coiled coil; that stretch reads LDSYEEKEDKVIKEMAAQIREVEQSRQEVVRS. Residues 169-213 are disordered; the sequence is VLEPQAVPDPEEGSSAPRSWKGMNSQVASSLQQPSNLDLPPAPEL. Positions 190-204 are enriched in polar residues; the sequence is GMNSQVASSLQQPSN.

As to quaternary structure, interacts with SASS6; the interaction increases with CENATAC acetylation. In terms of processing, acetylated. Acetylation oscillates throughout the cell cycle, and the acetylation state at Lys-31 is regulated by the deacetylase SIRT1 and the acetyltransferase NAT10. Deacetylated CENATAC is responsible for its centrosome targeting, and acetylated CENATAC promotes SASS6 degradation by enhancing the binding affinity of SASS6 for APC/C E3 ubiquitin-protein ligase complex/FZR1.

The protein resides in the cytoplasm. The protein localises to the cytoskeleton. Its subcellular location is the microtubule organizing center. It is found in the centrosome. In terms of biological role, component of the minor spliceosome that promotes splicing of a specific, rare minor intron subtype. Negative regulator of centrosome duplication. Constrains centriole number by modulating the degradation of the centrosome-duplication-associated protein SASS6 in an acetylation-dependent manner. SIRT1 deacetylates CENATAC in G1 phase, allowing for SASS6 accumulation on the centrosome and subsequent procentriole assembly. The CENATAC acetylation level is restored in mitosis by NAT10, promoting SASS6 proteasome degradation by facilitating SASS6 binding to APC/C E3 ubiquitin-protein ligase complex/FZR1. This is Centrosomal AT-AC splicing factor from Homo sapiens (Human).